A 184-amino-acid polypeptide reads, in one-letter code: Putative F-box protein At4g22420 (184 aa).

Residues 1-46 (MAECPTDLINEMFLRLRATTLKKCRVLSKPCFSLIDSPEKRVIERS) enclose the F-box domain. The segment at 68 to 126 (DDDEEEGNELKKSQARRNGVAKGEGNGNKVNGEAQEEVDDEEDDDDDASKGRGKHSRHV) is disordered. Residues 85 to 100 (NGVAKGEGNGNKVNGE) are compositionally biased toward low complexity. Residues 101 to 114 (AQEEVDDEEDDDDD) show a composition bias toward acidic residues.

This is Putative F-box protein At4g22420 from Arabidopsis thaliana (Mouse-ear cress).